Here is a 428-residue protein sequence, read N- to C-terminus: Adenylosuccinate synthetase (428 aa).

GTP is bound by residues 12–18 (GDEGKGK) and 40–42 (GHT). D13 functions as the Proton acceptor in the catalytic mechanism. The Mg(2+) site is built by D13 and G40. IMP is bound by residues 13–16 (DEGK), 38–41 (NAGH), T130, R144, Q225, T240, and R304. H41 serves as the catalytic Proton donor. Substrate is bound at residue 300-306 (VTTGRAR). GTP is bound by residues R306, 332 to 334 (KID), and 414 to 416 (SVG).

Belongs to the adenylosuccinate synthetase family. In terms of assembly, homodimer. Mg(2+) serves as cofactor.

Its subcellular location is the cytoplasm. It carries out the reaction IMP + L-aspartate + GTP = N(6)-(1,2-dicarboxyethyl)-AMP + GDP + phosphate + 2 H(+). It functions in the pathway purine metabolism; AMP biosynthesis via de novo pathway; AMP from IMP: step 1/2. In terms of biological role, plays an important role in the de novo pathway of purine nucleotide biosynthesis. Catalyzes the first committed step in the biosynthesis of AMP from IMP. In Clostridium botulinum (strain 657 / Type Ba4), this protein is Adenylosuccinate synthetase.